The following is a 314-amino-acid chain: Tetraacyldisaccharide 4'-kinase (314 aa).

61-68 is a binding site for ATP; the sequence is IVGGSGKT.

It belongs to the LpxK family.

It catalyses the reaction a lipid A disaccharide + ATP = a lipid IVA + ADP + H(+). It participates in glycolipid biosynthesis; lipid IV(A) biosynthesis; lipid IV(A) from (3R)-3-hydroxytetradecanoyl-[acyl-carrier-protein] and UDP-N-acetyl-alpha-D-glucosamine: step 6/6. Transfers the gamma-phosphate of ATP to the 4'-position of a tetraacyldisaccharide 1-phosphate intermediate (termed DS-1-P) to form tetraacyldisaccharide 1,4'-bis-phosphate (lipid IVA). This chain is Tetraacyldisaccharide 4'-kinase, found in Aliarcobacter butzleri (strain RM4018) (Arcobacter butzleri).